We begin with the raw amino-acid sequence, 375 residues long: N-acetylneuraminate epimerase (375 aa).

Positions 1 to 22 (MKLTKTALCTALFATFTFSANA) are cleaved as a signal peptide. Kelch repeat units follow at residues 43–87 (TVYV…AAVD), 89–140 (KLYV…ASHG), 142–176 (KVYI…EIAA), 177–222 (AYFD…TIQG), 225–273 (LVVV…LAGA), 295–344 (KQYK…SYNN), and 346–375 (VLLI…LTIE). The active-site Proton acceptor is the Glu231.

It belongs to the NanM family. Homodimer.

The protein localises to the periplasm. It carries out the reaction N-acetyl-alpha-neuraminate = N-acetyl-beta-neuraminate. In terms of biological role, converts alpha-N-acetylneuranimic acid (Neu5Ac) to the beta-anomer, accelerating the equilibrium between the alpha- and beta-anomers. Probably facilitates sialidase-negative bacteria to compete successfully for limited amounts of extracellular Neu5Ac, which is likely taken up in the beta-anomer. In addition, the rapid removal of sialic acid from solution might be advantageous to the bacterium to damp down host responses. This is N-acetylneuraminate epimerase from Haemophilus influenzae (strain PittEE).